The sequence spans 440 residues: MSEFSQTVPELVAWARKNDFSISLPVDRLSFLLAVATLNGERLDGEMSEGELVDAFRHVSDAFEQTSETIGVRANNAINDMVRQRLLNRFTSEQAEGNAIYRLTPLGIGITDYYIRQREFSTLRLSMQLSIVAGELKRAADAAEEGGDEFHWHRNVYAPLKYSVAEIFDSIDLTQRLMDEQQQQVKDDIAQLLNKDWRAAISSCELLLSETSGTLRELQDTLEAAGDKLQANLLRIQDATMIHDDLHFVDRLVFDLQSKLDRIISWGQQSIDLWIGYDRHVHKFIRTAIDMDKNRVFAQRLRQSVQTYFDEPWALTYANADRLLDMRDEEMVLRDEEVTGELPEDLEYEEFNEIREQLAAIIEEQLAVYKTRQVPLDLGLVVREYLSQYPRARHFDVARIVIDQAVRLGVAQADFTGLPAKWQPINDYGAKVQAHVIDKY.

The interval 208-236 (LSETSGTLRELQDTLEAAGDKLQANLLRI) is leucine-zipper.

It belongs to the MukF family. As to quaternary structure, interacts, and probably forms a ternary complex, with MukE and MukB via its C-terminal region. The complex formation is stimulated by calcium or magnesium. It is required for an interaction between MukE and MukB.

It is found in the cytoplasm. It localises to the nucleoid. Functionally, involved in chromosome condensation, segregation and cell cycle progression. May participate in facilitating chromosome segregation by condensation DNA from both sides of a centrally located replisome during cell division. Not required for mini-F plasmid partitioning. Probably acts via its interaction with MukB and MukE. Overexpression results in anucleate cells. It has a calcium binding activity. The polypeptide is Chromosome partition protein MukF (Escherichia coli O127:H6 (strain E2348/69 / EPEC)).